A 177-amino-acid polypeptide reads, in one-letter code: Large ribosomal subunit protein uL6 (177 aa).

Belongs to the universal ribosomal protein uL6 family. As to quaternary structure, part of the 50S ribosomal subunit.

This protein binds to the 23S rRNA, and is important in its secondary structure. It is located near the subunit interface in the base of the L7/L12 stalk, and near the tRNA binding site of the peptidyltransferase center. This Rhodospirillum centenum (strain ATCC 51521 / SW) protein is Large ribosomal subunit protein uL6.